A 104-amino-acid polypeptide reads, in one-letter code: L-rhamnose mutarotase (104 aa).

Position 18 (Tyr-18) interacts with substrate. The active-site Proton donor is the His-22. Substrate-binding positions include Tyr-41 and 76-77 (WW).

This sequence belongs to the rhamnose mutarotase family. As to quaternary structure, homodimer.

It localises to the cytoplasm. The enzyme catalyses alpha-L-rhamnose = beta-L-rhamnose. The protein operates within carbohydrate metabolism; L-rhamnose metabolism. Its function is as follows. Involved in the anomeric conversion of L-rhamnose. The chain is L-rhamnose mutarotase from Burkholderia ambifaria (strain MC40-6).